The sequence spans 438 residues: Anaerobic glycerol-3-phosphate dehydrogenase subunit B (438 aa).

The protein belongs to the anaerobic G-3-P dehydrogenase subunit B family. As to quaternary structure, composed of a catalytic GlpA/B dimer and of membrane bound GlpC. FMN is required as a cofactor.

The catalysed reaction is a quinone + sn-glycerol 3-phosphate = dihydroxyacetone phosphate + a quinol. It functions in the pathway polyol metabolism; glycerol degradation via glycerol kinase pathway; glycerone phosphate from sn-glycerol 3-phosphate (anaerobic route): step 1/1. In terms of biological role, conversion of glycerol 3-phosphate to dihydroxyacetone. Uses fumarate or nitrate as electron acceptor. In Vibrio vulnificus (strain CMCP6), this protein is Anaerobic glycerol-3-phosphate dehydrogenase subunit B.